A 99-amino-acid chain; its full sequence is Small integral membrane protein 14 (99 aa).

The Lumenal portion of the chain corresponds to 1-49; it reads MAEGGFDPCECVCSHEHAMRRLINLLRQSQSYCTDTECLQELPGPSGDN. The chain crosses the membrane as a helical span at residues 50-70; that stretch reads GISVTMILVAWMVIALILFLL. At 71-99 the chain is on the cytoplasmic side; that stretch reads RPPNLRGSNLPGKPTSPHNGQDPPAPPVD. The tract at residues 77 to 99 is disordered; it reads GSNLPGKPTSPHNGQDPPAPPVD.

The protein resides in the endoplasmic reticulum membrane. The sequence is that of Small integral membrane protein 14 (SMIM14) from Pongo abelii (Sumatran orangutan).